We begin with the raw amino-acid sequence, 376 residues long: RNA binding protein fox-1 homolog 1 (376 aa).

Residues 1–126 (MEEKGSRMVQ…QPKRLHVSNI (126 aa)) are disordered. A compositionally biased stretch (polar residues) spans 72–89 (QTHSEQSPADTNAQTVSG). Residues 90-101 (TATQTDDAAPTD) are compositionally biased toward low complexity. Residues 102–115 (GQPQTQPSENTENK) show a composition bias toward polar residues. Positions 119 to 195 (KRLHVSNIPF…RKIEVNNATA (77 aa)) constitute an RRM domain. Arg319 is modified (asymmetric dimethylarginine).

In terms of assembly, binds to the C-terminus of ATXN2.

It localises to the nucleus. The protein resides in the cytoplasm. In terms of biological role, RNA-binding protein that regulates alternative splicing events by binding to 5'-UGCAUGU-3' elements. Prevents binding of U2AF2 to the 3'-splice site. Regulates alternative splicing of tissue-specific exons and of differentially spliced exons during erythropoiesis. In Macaca fascicularis (Crab-eating macaque), this protein is RNA binding protein fox-1 homolog 1 (RBFOX1).